The sequence spans 123 residues: Large ribosomal subunit protein uL14 (123 aa).

This sequence belongs to the universal ribosomal protein uL14 family. As to quaternary structure, part of the 50S ribosomal subunit. Forms a cluster with proteins L3 and L19. In the 70S ribosome, L14 and L19 interact and together make contacts with the 16S rRNA in bridges B5 and B8.

Functionally, binds to 23S rRNA. Forms part of two intersubunit bridges in the 70S ribosome. This is Large ribosomal subunit protein uL14 from Histophilus somni (strain 129Pt) (Haemophilus somnus).